A 204-amino-acid polypeptide reads, in one-letter code: Somatotropin (204 aa).

An N-terminal signal peptide occupies residues 1–17 (MNSVVLLLSVVCLGVSS). Pyrrolidone carboxylic acid is present on Q18. H36 is a Zn(2+) binding site. Cysteines 69 and 177 form a disulfide. E186 contributes to the Zn(2+) binding site. C194 and C202 are oxidised to a cystine.

The protein belongs to the somatotropin/prolactin family.

It localises to the secreted. In terms of biological role, growth hormone plays an important role in growth control and involved in the regulation of several anabolic processes. In Oreochromis niloticus (Nile tilapia), this protein is Somatotropin (gh).